The chain runs to 130 residues: Serum amyloid A-4 protein (130 aa).

The signal sequence occupies residues 1–18 (MRLATVIVLCSLFLGVSG). The tract at residues 109 to 130 (EEWGRSGKNPNHFRPEGLPEKF) is disordered. A compositionally biased stretch (basic and acidic residues) spans 121–130 (FRPEGLPEKF).

It belongs to the SAA family. As to quaternary structure, apolipoprotein of the HDL complex. Expressed by the liver; secreted in plasma.

It localises to the secreted. In terms of biological role, major acute phase reactant. This chain is Serum amyloid A-4 protein, found in Mus musculus (Mouse).